Here is a 152-residue protein sequence, read N- to C-terminus: Deoxyuridine 5'-triphosphate nucleotidohydrolase (152 aa).

Residues 70–72 (RSG), Asn83, 87–89 (TID), and Lys97 contribute to the substrate site.

It belongs to the dUTPase family. It depends on Mg(2+) as a cofactor.

It carries out the reaction dUTP + H2O = dUMP + diphosphate + H(+). It participates in pyrimidine metabolism; dUMP biosynthesis; dUMP from dCTP (dUTP route): step 2/2. In terms of biological role, this enzyme is involved in nucleotide metabolism: it produces dUMP, the immediate precursor of thymidine nucleotides and it decreases the intracellular concentration of dUTP so that uracil cannot be incorporated into DNA. The polypeptide is Deoxyuridine 5'-triphosphate nucleotidohydrolase (Corynebacterium diphtheriae (strain ATCC 700971 / NCTC 13129 / Biotype gravis)).